A 57-amino-acid chain; its full sequence is UPF0509 protein YciZ (57 aa).

This sequence belongs to the UPF0509 family.

The sequence is that of UPF0509 protein YciZ (yciZ) from Escherichia coli O157:H7.